The sequence spans 516 residues: UDP-N-acetylmuramyl-tripeptide synthetase (516 aa).

Residue Ser36 participates in UDP-N-acetyl-alpha-D-muramoyl-L-alanyl-D-glutamate binding. 113–119 is an ATP binding site; the sequence is GTKGKTT. UDP-N-acetyl-alpha-D-muramoyl-L-alanyl-D-glutamate contacts are provided by residues 159-160, Ser186, and Arg194; that span reads TT. Lys228 is modified (N6-carboxylysine).

This sequence belongs to the MurCDEF family. MurE subfamily. Carboxylation is probably crucial for Mg(2+) binding and, consequently, for the gamma-phosphate positioning of ATP.

It is found in the cytoplasm. Its pathway is cell wall biogenesis; peptidoglycan biosynthesis. In terms of biological role, catalyzes the addition of an amino acid to the nucleotide precursor UDP-N-acetylmuramoyl-L-alanyl-D-glutamate (UMAG) in the biosynthesis of bacterial cell-wall peptidoglycan. In Limosilactobacillus reuteri (strain DSM 20016) (Lactobacillus reuteri), this protein is UDP-N-acetylmuramyl-tripeptide synthetase.